A 1486-amino-acid polypeptide reads, in one-letter code: Chromosome partition protein MukB (1486 aa).

34-41 is a binding site for ATP; that stretch reads GGNGAGKS. Coiled coils occupy residues 326 to 418, 444 to 480, and 509 to 603; these read LEAD…QYNQ, LETF…QAYQ, and RHLA…RAPV. A flexible hinge region spans residues 666–783; the sequence is PGGSEDQRLN…EVPLFGRAAR (118 aa). Coiled coils occupy residues 835 to 923, 977 to 1115, and 1209 to 1266; these read EAEI…AKLE, EMLS…TAKA, and VEAI…QNVS.

The protein belongs to the SMC family. MukB subfamily. In terms of assembly, homodimerization via its hinge domain. Binds to DNA via its C-terminal region. Interacts, and probably forms a ternary complex, with MukE and MukF via its C-terminal region. The complex formation is stimulated by calcium or magnesium. Interacts with tubulin-related protein FtsZ.

It localises to the cytoplasm. The protein resides in the nucleoid. Plays a central role in chromosome condensation, segregation and cell cycle progression. Functions as a homodimer, which is essential for chromosome partition. Involved in negative DNA supercoiling in vivo, and by this means organize and compact chromosomes. May achieve or facilitate chromosome segregation by condensation DNA from both sides of a centrally located replisome during cell division. This Escherichia coli O17:K52:H18 (strain UMN026 / ExPEC) protein is Chromosome partition protein MukB.